Consider the following 104-residue polypeptide: Disrupted in renal carcinoma protein 1 (104 aa).

A disordered region spans residues 1 to 23; it reads MPEAHMQPAKLQTSLPTTDHGSK. A compositionally biased stretch (polar residues) spans 10 to 19; sequence KLQTSLPTTD.

Expressed at low steady-state level in adult placenta, testis, ovary, prostate, fetal kidney, spleen and skeletal muscle.

The protein is Disrupted in renal carcinoma protein 1 (DIRC1) of Homo sapiens (Human).